The chain runs to 1094 residues: Formin-like protein 1 (1094 aa).

Disordered regions lie at residues 1 to 29 (MGNA…KQPM), 173 to 199 (SGAE…VPKS), and 507 to 627 (AATP…GVKA). Gly2 is lipidated: N-myristoyl glycine. Ser7 carries the phosphoserine modification. Positions 16–28 (ASPPKQPAVPKQP) are enriched in pro residues. A GBD/FH3 domain is found at 27 to 464 (QPMPAAGELE…SRRIPEPEKV (438 aa)). Ser184 carries the phosphoserine modification. The span at 519 to 529 (RVSTDSPSTAE) shows a compositional bias: polar residues. Pro residues-rich tracts occupy residues 535 to 549 (ASPP…PPLP) and 559 to 610 (PSAP…PGGP). The 392-residue stretch at 627-1018 (AKKPIQTKFR…DTSGREEPPT (392 aa)) folds into the FH2 domain. Ser688 is modified (phosphoserine). Residues 1002 to 1017 (WKKEAAADTSGREEPP) show a composition bias toward basic and acidic residues. Residues 1002-1094 (WKKEAAADTS…PLPVTTDLAL (93 aa)) are disordered. Position 1021 is a phosphoserine (Ser1021). The 34-residue stretch at 1049 to 1082 (SDRDGAIEDIITDLRNQPYIRADTGRRSARRRPP) folds into the DAD domain.

Belongs to the formin homology family. In terms of assembly, interacts with RAC1, PFN1 and PFN2. Interacts (activated by RAC1) with SRGAP2 (via SH3 domain); regulates the actin filament severing activity of FMNL1. In terms of processing, myristoylation mediates membrane localization. As to expression, highly expressed in the spleen, lymph node and bone marrow cells.

Its subcellular location is the cytoplasm. The protein localises to the cell membrane. It localises to the cytoplasmic vesicle. The protein resides in the phagosome. Its function is as follows. Plays a role in the regulation of cell morphology and cytoskeletal organization. Required in the cortical actin filament dynamics and cell shape. May play a role in the control of cell motility and survival of macrophages. The sequence is that of Formin-like protein 1 (Fmnl1) from Mus musculus (Mouse).